A 511-amino-acid polypeptide reads, in one-letter code: GMP synthase [glutamine-hydrolyzing] (511 aa).

Positions Asp-5–Thr-195 constitute a Glutamine amidotransferase type-1 domain. Cys-82 (nucleophile) is an active-site residue. Residues His-169 and Glu-171 contribute to the active site. The 191-residue stretch at Trp-196–Arg-386 folds into the GMPS ATP-PPase domain. Ser-223–Ser-229 lines the ATP pocket.

As to quaternary structure, homodimer.

The enzyme catalyses XMP + L-glutamine + ATP + H2O = GMP + L-glutamate + AMP + diphosphate + 2 H(+). The protein operates within purine metabolism; GMP biosynthesis; GMP from XMP (L-Gln route): step 1/1. Functionally, catalyzes the synthesis of GMP from XMP. The chain is GMP synthase [glutamine-hydrolyzing] from Campylobacter hominis (strain ATCC BAA-381 / DSM 21671 / CCUG 45161 / LMG 19568 / NCTC 13146 / CH001A).